A 479-amino-acid chain; its full sequence is Anaerobic nitric oxide reductase flavorubredoxin (479 aa).

Positions 30–210 (LRGSSYNSYL…PFSRLVTPKI (181 aa)) are zinc metallo-hydrolase. His79, Glu81, Asp83, His147, Asp166, and His227 together coordinate Fe cation. Residues 254 to 393 (ITIFYDTMSN…LCREHGREIA (140 aa)) form the Flavodoxin-like domain. Residues 260–264 (TMSNN) and 342–369 (AFGS…EMSL) each bind FMN. Residues 423 to 474 (GPRMQCSVCQWIYDPAKGEPMQDVAPGTPWSEVPDNFLCPECSLGKDVFDEL) form the Rubredoxin-like domain. Residues Cys428, Cys431, Cys461, and Cys464 each coordinate Fe cation.

In the N-terminal section; belongs to the zinc metallo-hydrolase group 3 family. As to quaternary structure, homotetramer. The cofactor is Fe cation. FMN serves as cofactor.

The protein localises to the cytoplasm. Its pathway is nitrogen metabolism; nitric oxide reduction. Anaerobic nitric oxide reductase; uses NADH to detoxify nitric oxide (NO), protecting several 4Fe-4S NO-sensitive enzymes. Has at least 2 reductase partners, only one of which (NorW, flavorubredoxin reductase) has been identified. NO probably binds to the di-iron center; electrons enter from the NorW at rubredoxin and are transferred sequentially to the FMN center and the di-iron center. Also able to function as an aerobic oxygen reductase. This is Anaerobic nitric oxide reductase flavorubredoxin from Shigella flexneri serotype 5b (strain 8401).